A 485-amino-acid polypeptide reads, in one-letter code: 6-phosphogluconate dehydrogenase, decarboxylating (485 aa).

Residues 12-17 (GLAVMG), 35-37 (NRT), 77-79 (VKA), and Asn-105 contribute to the NADP(+) site. Residues Asn-105 and 131–133 (SGG) each bind substrate. Residue Lys-186 is the Proton acceptor of the active site. A substrate-binding site is contributed by 189-190 (HN). Glu-193 acts as the Proton donor in catalysis. Residues Tyr-194, Lys-263, Arg-290, Arg-449, and His-455 each coordinate substrate.

Belongs to the 6-phosphogluconate dehydrogenase family. Homodimer.

It catalyses the reaction 6-phospho-D-gluconate + NADP(+) = D-ribulose 5-phosphate + CO2 + NADPH. The protein operates within carbohydrate degradation; pentose phosphate pathway; D-ribulose 5-phosphate from D-glucose 6-phosphate (oxidative stage): step 3/3. In terms of biological role, catalyzes the oxidative decarboxylation of 6-phosphogluconate to ribulose 5-phosphate and CO(2), with concomitant reduction of NADP to NADPH. The sequence is that of 6-phosphogluconate dehydrogenase, decarboxylating (6-PGD) from Cunninghamella elegans.